The sequence spans 317 residues: Spermidine synthase 2 (317 aa).

Positions proline 27–threonine 264 constitute a PABS domain. Residue glutamine 58 coordinates S-adenosyl 3-(methylsulfanyl)propylamine. Residue tyrosine 88 participates in putrescine binding. S-adenosyl 3-(methylsulfanyl)propylamine is bound by residues glutamine 89, aspartate 113, glutamate 133, aspartate 164–glycine 165, and aspartate 183. The Proton acceptor role is filled by aspartate 183. Residues aspartate 183–aspartate 186 and tyrosine 252 each bind putrescine.

Belongs to the spermidine/spermine synthase family.

The enzyme catalyses S-adenosyl 3-(methylsulfanyl)propylamine + putrescine = S-methyl-5'-thioadenosine + spermidine + H(+). It functions in the pathway amine and polyamine biosynthesis; spermidine biosynthesis; spermidine from putrescine: step 1/1. This is Spermidine synthase 2 from Datura stramonium (Jimsonweed).